The primary structure comprises 506 residues: Cytochrome P450 monooxygenase tpcB (506 aa).

Cys450 contributes to the heme binding site.

The protein belongs to the cytochrome P450 family. Heme is required as a cofactor.

It participates in secondary metabolite biosynthesis; terpenoid biosynthesis. In terms of biological role, cytochrome P450 monooxygenase; part of the gene cluster that mediates the biosynthesis of terpestacin. The bifunctional terpene synthase tpcA converts isopentenyl diphosphate (IPP) and dimethylallyl diphosphate (DMAPP) into the sesterterpene preterpestacin I. The C-terminal prenyltransferase (PT) domain of tpcA catalyzes formation of GFPP, whereas the N-terminal terpene cyclase (TC) domain catalyzes the cyclization of GFPP into preterpestacin I. The cytochrome P450 monooxygenase tpcB then hydroxylates preterpestacin I to yield 24-hydroxypreterpstacin I (renamed as preterpestacin II) whereas the cytochrome P450 monooxygenase tpcC further hydroxylates preterpestacin II to yield 16,17-dihydroxypreterpestacin II (renamed as preterpestacin III). Finally, the FAD-dependent monooxygenase tpcD converts preterpestacin III into terpestacin. The polypeptide is Cytochrome P450 monooxygenase tpcB (Cochliobolus heterostrophus (strain C5 / ATCC 48332 / race O) (Southern corn leaf blight fungus)).